Here is a 172-residue protein sequence, read N- to C-terminus: 16S rRNA aminocarboxypropyltransferase (172 aa).

Residues Thr-21, Leu-71, Leu-93, and Thr-112 each contribute to the S-adenosyl-L-methionine site.

It belongs to the TDD superfamily. TSR3 family.

The protein resides in the cytoplasm. It carries out the reaction an N(1)-methylpseudouridine in rRNA + S-adenosyl-L-methionine = N(1)-methyl-N(3)-[(3S)-3-amino-3-carboxypropyl]pseudouridine in rRNA + S-methyl-5'-thioadenosine + H(+). Its function is as follows. Aminocarboxypropyltransferase that catalyzes the aminocarboxypropyl transfer on pseudouridine at position 914 in 16S rRNA. It constitutes the last step in biosynthesis of the hypermodified N1-methyl-N3-(3-amino-3-carboxypropyl) pseudouridine (m1acp3-Psi). This chain is 16S rRNA aminocarboxypropyltransferase, found in Methanocaldococcus jannaschii (strain ATCC 43067 / DSM 2661 / JAL-1 / JCM 10045 / NBRC 100440) (Methanococcus jannaschii).